The following is a 342-amino-acid chain: Holliday junction branch migration complex subunit RuvB (342 aa).

The segment at 1–179 is large ATPase domain (RuvB-L); the sequence is MTNILSPEKS…FGIPMRLNFY (179 aa). Residues I18, R19, G60, K63, T64, T65, 126–128, R169, Y179, and R216 contribute to the ATP site; that span reads EDF. T64 lines the Mg(2+) pocket. Residues 180–250 are small ATPAse domain (RuvB-S); sequence NTEELKKVLN…ISDFGLKRLE (71 aa). The segment at 253-342 is head domain (RuvB-H); sequence RIGLDSNDYR…HQFNIFNENE (90 aa). R289, R308, and R313 together coordinate DNA.

Belongs to the RuvB family. In terms of assembly, homohexamer. Forms an RuvA(8)-RuvB(12)-Holliday junction (HJ) complex. HJ DNA is sandwiched between 2 RuvA tetramers; dsDNA enters through RuvA and exits via RuvB. An RuvB hexamer assembles on each DNA strand where it exits the tetramer. Each RuvB hexamer is contacted by two RuvA subunits (via domain III) on 2 adjacent RuvB subunits; this complex drives branch migration. In the full resolvosome a probable DNA-RuvA(4)-RuvB(12)-RuvC(2) complex forms which resolves the HJ.

Its subcellular location is the cytoplasm. The enzyme catalyses ATP + H2O = ADP + phosphate + H(+). In terms of biological role, the RuvA-RuvB-RuvC complex processes Holliday junction (HJ) DNA during genetic recombination and DNA repair, while the RuvA-RuvB complex plays an important role in the rescue of blocked DNA replication forks via replication fork reversal (RFR). RuvA specifically binds to HJ cruciform DNA, conferring on it an open structure. The RuvB hexamer acts as an ATP-dependent pump, pulling dsDNA into and through the RuvAB complex. RuvB forms 2 homohexamers on either side of HJ DNA bound by 1 or 2 RuvA tetramers; 4 subunits per hexamer contact DNA at a time. Coordinated motions by a converter formed by DNA-disengaged RuvB subunits stimulates ATP hydrolysis and nucleotide exchange. Immobilization of the converter enables RuvB to convert the ATP-contained energy into a lever motion, pulling 2 nucleotides of DNA out of the RuvA tetramer per ATP hydrolyzed, thus driving DNA branch migration. The RuvB motors rotate together with the DNA substrate, which together with the progressing nucleotide cycle form the mechanistic basis for DNA recombination by continuous HJ branch migration. Branch migration allows RuvC to scan DNA until it finds its consensus sequence, where it cleaves and resolves cruciform DNA. The polypeptide is Holliday junction branch migration complex subunit RuvB (Rickettsia peacockii (strain Rustic)).